The primary structure comprises 939 residues: Isoleucine--tRNA ligase (939 aa).

The 'HIGH' region motif lies at 59–69 (PYANGDIHIGH). Glu570 contributes to the L-isoleucyl-5'-AMP binding site. The 'KMSKS' region signature appears at 611–615 (KMSKS). Position 614 (Lys614) interacts with ATP. The Zn(2+) site is built by Cys902, Cys905, Cys922, and Cys925.

The protein belongs to the class-I aminoacyl-tRNA synthetase family. IleS type 1 subfamily. In terms of assembly, monomer. Zn(2+) serves as cofactor.

It is found in the cytoplasm. It carries out the reaction tRNA(Ile) + L-isoleucine + ATP = L-isoleucyl-tRNA(Ile) + AMP + diphosphate. In terms of biological role, catalyzes the attachment of isoleucine to tRNA(Ile). As IleRS can inadvertently accommodate and process structurally similar amino acids such as valine, to avoid such errors it has two additional distinct tRNA(Ile)-dependent editing activities. One activity is designated as 'pretransfer' editing and involves the hydrolysis of activated Val-AMP. The other activity is designated 'posttransfer' editing and involves deacylation of mischarged Val-tRNA(Ile). In Nitrosomonas europaea (strain ATCC 19718 / CIP 103999 / KCTC 2705 / NBRC 14298), this protein is Isoleucine--tRNA ligase.